Consider the following 344-residue polypeptide: Beta-1,4-galactosyltransferase 4 (344 aa).

The Cytoplasmic segment spans residues methionine 1–lysine 12. Residues phenylalanine 13–isoleucine 38 traverse the membrane as a helical; Signal-anchor for type II membrane protein segment. Over glutamine 39–alanine 344 the chain is Lumenal. Residues cysteine 77 and cysteine 118 are joined by a disulfide bond. Residues proline 129–arginine 133, phenylalanine 168–arginine 170, and valine 195–aspartate 196 each bind UDP-alpha-D-galactose. Cysteine 189 and cysteine 208 are disulfide-bonded. Aspartate 196 provides a ligand contact to Mn(2+). Asparagine 220 carries an N-linked (GlcNAc...) asparagine glycan. UDP-alpha-D-galactose-binding residues include tyrosine 224 and tryptophan 256. Residue glycine 258–aspartate 261 coordinates N-acetyl-D-glucosamine. Histidine 289 is a binding site for Mn(2+). Histidine 289–arginine 291 provides a ligand contact to UDP-alpha-D-galactose. Arginine 301 lines the N-acetyl-D-glucosamine pocket. Asparagine 335 is a glycosylation site (N-linked (GlcNAc...) asparagine).

Belongs to the glycosyltransferase 7 family. In terms of assembly, interacts with SLC35A2 (isoform 2; UGT1). Requires Mn(2+) as cofactor. N-glycosylated. In terms of tissue distribution, highest expression is observed in placenta, pancreas, kidney and heart. Expressed in corneal epithelial cells.

It localises to the golgi apparatus membrane. The protein resides in the secreted. It catalyses the reaction N-acetyl-D-glucosamine + UDP-alpha-D-galactose = beta-D-galactosyl-(1-&gt;4)-N-acetyl-D-glucosamine + UDP + H(+). The catalysed reaction is a beta-D-GlcNAc-(1-&gt;3)-beta-D-Gal-(1-&gt;4)-beta-D-Glc-(1&lt;-&gt;1)-Cer(d18:1(4E)) + UDP-alpha-D-galactose = a neolactoside nLc4Cer(d18:1(4E)) + UDP + H(+). It carries out the reaction 3-O-{beta-D-galactosyl-(1-&gt;3)-[6-O-sulfo-N-acetyl-beta-D-glucosaminyl-(1-&gt;6)]-N-acetyl-alpha-D-galactosaminyl}-L-seryl-[protein] + UDP-alpha-D-galactose = 3-O-{beta-D-galactosyl-(1-&gt;3)-[beta-D-galactosyl-(1-&gt;4)-6-O-sulfo-N-acetyl-beta-D-glucosaminyl-(1-&gt;6)]-N-acetyl-alpha-D-galactosaminyl}-L-seryl-[protein] + UDP + H(+). The enzyme catalyses 3-O-{beta-D-galactosyl-(1-&gt;3)-[6-O-sulfo-N-acetyl-beta-D-glucosaminyl-(1-&gt;6)]-N-acetyl-alpha-D-galactosaminyl}-L-threonyl-[protein] + UDP-alpha-D-galactose = 3-O-{beta-D-galactosyl-(1-&gt;3)-[beta-D-galactosyl-(1-&gt;4)-6-O-sulfo-N-acetyl-beta-D-glucosaminyl-(1-&gt;6)]-N-acetyl-alpha-D-galactosaminyl}-L-threonyl-[protein] + UDP + H(+). Its pathway is protein modification; protein glycosylation. The protein operates within glycolipid biosynthesis. Its activity is regulated as follows. Up-regulated by LALBA. In terms of biological role, galactose (Gal) transferase involved in the synthesis of terminal N-acetyllactosamine (LacNac) unit present on glycan chains of glycoproteins and glycosphingolipids. Catalyzes the transfer of Gal residue via a beta1-&gt;4 linkage from UDP-Gal to the non-reducing terminal N-acetyl glucosamine 6-O-sulfate (6-O-sulfoGlcNAc) in the linearly growing chain of both N- and O-linked keratan sulfate proteoglycans. Cooperates with B3GNT7 N-acetyl glucosamine transferase and CHST6 and CHST1 sulfotransferases to construct and elongate mono- and disulfated disaccharide units [-&gt;3Galbeta1-&gt;4(6-sulfoGlcNAcbeta)1-&gt;] and [-&gt;3(6-sulfoGalbeta)1-&gt;4(6-sulfoGlcNAcbeta)1-&gt;] within keratan sulfate polymer. Transfers Gal residue via a beta1-&gt;4 linkage to terminal 6-O-sulfoGlcNAc within the LacNac unit of core 2 O-glycans forming 6-sulfo-sialyl-Lewis X (sLex). May contribute to the generation of sLex epitope on mucin-type glycoproteins that serve as ligands for SELL/L-selectin, a major regulator of leukocyte migration. In the biosynthesis pathway of neolacto-series glycosphingolipids, transfers Gal residue via a beta1-&gt;4 linkage to terminal GlcNAc of a lactotriaosylceramide (Lc3Cer) acceptor to form a neolactotetraosylceramide. The sequence is that of Beta-1,4-galactosyltransferase 4 from Homo sapiens (Human).